The chain runs to 1033 residues: NACHT, LRR and PYD domains-containing protein 3 (1033 aa).

In terms of domain architecture, Pyrin spans 1–91 (MTSVRCKLAQ…WEKAKKDQPE (91 aa)). Position 3 is a phosphoserine (Ser3). Cys6 and Cys104 are oxidised to a cystine. Tyr11 is modified (phosphotyrosine). The S-palmitoyl cysteine moiety is linked to residue Cys126. The interval 127 to 130 (KKKK) is required for binding to phosphatidylinositol 4-phosphate (PtdIns4P). Phosphotyrosine; by BTK is present on residues Tyr132, Tyr136, and Tyr145. An FISNA domain is found at 136-206 (YRRHVRSRFY…SSLKLELLFE (71 aa)). Ser157 carries the phosphoserine modification. A Phosphotyrosine; by BTK modification is found at Tyr164. Residue Thr165 participates in ATP binding. Ser194 carries the post-translational modification Phosphoserine; by MAPK8. Phosphoserine is present on Ser197. In terms of domain architecture, NACHT spans 216 to 532 (HTVVFQGAAG…EFFAAMYYLL (317 aa)). 222–230 (GAAGIGKTI) is an ATP binding site. A Phosphoserine modification is found at Ser261. At Ser291 the chain carries Phosphoserine; by PKD/PRKD1. A Glycyl lysine isopeptide (Lys-Gly) (interchain with G-Cter in ubiquitin) cross-link involves residue Lys320. Residue Ser330 is modified to Phosphoserine. Residues 351 to 355 (LEKLQ) carry the KFERQ-like motif 1 motif. Residue Lys426 forms a Glycyl lysine isopeptide (Lys-Gly) (interchain with G-Cter in ubiquitin) linkage. His518 contributes to the ATP binding site. A KFERQ-like motif 2 motif is present at residues 601–605 (QVRLE). Lys687 participates in a covalent cross-link: Glycyl lysine isopeptide (Lys-Gly) (interchain with G-Cter in ubiquitin). Ser725 and Ser732 each carry phosphoserine. LRR repeat units lie at residues 739-759 (SLTELDLSDNTLGDPGMRVLC), 768-789 (NIQRLWLGRCGLSHQCCFDISS), 796-816 (KLVELDLSDNALGDFGIRLLC), 825-846 (NLQKLWLVSCCLTSACCQDLAL), and 853-873 (SLTRLYIGENALGDSGVQVLC). The KFERQ-like motif 3 motif lies at 795 to 799 (QKLVE). Residue Ser803 is modified to Phosphoserine; by CSNK1A1. Residues Cys834, Cys835, and Cys841 are each lipidated (S-palmitoyl cysteine). The residue at position 858 (Tyr858) is a Phosphotyrosine. Lys875 is covalently cross-linked (Glycyl lysine isopeptide (Lys-Gly) (interchain with G-Cter in ubiquitin)). LRR repeat units lie at residues 882-903 (NLQKLGLVNSGLTSICCSALTS), 910-930 (NFTHLYLRSNALGDTGLRLLC), 939-960 (KLQMLELDNCSLTSHSCWNLST), and 967-988 (SLRKLNLGNNDLGDLCVVTLCE). Cys955 carries the S-palmitoyl cysteine lipid modification. Lys970 participates in a covalent cross-link: Glycyl lysine isopeptide (Lys-Gly) (interchain with G-Cter in ubiquitin). The KFERQ-like motif 4 signature appears at 988-992 (EVLKQ). Residue Ser1032 is modified to Phosphoserine.

It belongs to the NLRP family. As to quaternary structure, sensor component of NLRP3 inflammasomes; inflammasomes are supramolecular complexes that assemble in the cytosol in response to pathogens and other damage-associated signals and play critical roles in innate immunity and inflammation. The core of NLRP3 inflammasomes consists of a signal sensor component (NLRP3), an adapter (PYCARD/ASC), which recruits an effector pro-inflammatory caspase (CASP1 and, possibly, CASP4 and CASP5). Homodecamer; inactive NLRP3 forms homodecameric double-ring cages that hide pyrin domains within NACHT-LRR rings to avoid premature activation. Interacts (via pyrin domain) with PYCARD/ASC (via pyrin domain); interaction is direct. Interacts (via LRR repeat domain) with NEK7 (via N-terminus); the interaction is required for the formation of the complex NLRP3:PYCARD, oligomerization of PYCARD/ASC and activation of CASP1. Interacts (via LRR repeat domain) with NR4A1/Nur77 (via N-terminus); the interaction is direct, requires activation of NR4A1 by its ligands NBRE-containing dsDNA and lipopolysaccharide, and stimulates the association of NLRP3 with NEK7 for non-canonical NLRP3 inflammasome activation. Interacts with CARD8; leading to inhibit formation of the NLRP3 inflammasome. Interacts with MEFV; this interaction targets NLRP3 to degradation by autophagy, hence preventing excessive IL1B- and IL18-mediated inflammation. Interacts with EIF2AK2/PKR; this interaction requires EIF2AK2 activity, is accompanied by EIF2AK2 autophosphorylation and promotes inflammasome assembly in response to specific stimuli. Interacts with GBP5 (via DAPIN domain); this interaction promotes inflammasome assembly in response to microbial and soluble, but not crystalline, agents. Interacts with PML (isoform PML-1) (via the leucine-rich repeat (LRR) domain); PML-mediated increase in NLRP3 inflammasome activation does not depend upon this interaction. Interacts (via NACHT domain) with DHX33 (via DEAH box); NLRP3 activation in presence of cytosolic dsRNA is mediated by DHX33. Interacts (via NACHT and LRR domains) with ARRB2; this interaction is direct and inducible by polyunsaturated fatty acids (PUFAs). Interacts (via NACHT domain) with DDX3X under both LPS-primed and inflammasome-activating conditions. Interacts with IRF4 (via the LRR domain); this interaction is direct and is required for optimal IRF4 binding to IL4 promoter and efficient IL4 transactivation during differentiation of Th2 helper T-cells. Interacts with MAVS; promoting localization to mitochondria and activation of the NLRP3 inflammasome. Interacts with MARK4; promoting localization of NLRP3 to the microtubule organizing center (MTOC). Interacts with TRIM50; this interaction also promotes NLRP3 oligomerization and subsequent inflammasome activation. Interacts with IRGM; preventing NLRP3 inflammasome assembly and promoting NLRP3 degradation. Interacts (via KFERQ-like motifs) with HSPA8/HSC70; promoting NLRP3 degradation by the chaperone-mediated autophagy pathway. Interacts (via NACHT and LLR domains) with ABHD8; this interaction is enhanced in the presence of NLRP3 inflammasome inducers, such as ATP, nigericin, silica, or alum. Interaction with ABHD8 leads the recruitment of ZDHHC12, hence facilitating NLRP3 palmitoylation and degradation by the chaperone-mediated autophagy pathway (CMA), therefore attenuating NLRP3 inflammasome activation. Post-translationally, phosphorylation at Ser-194 by MAPK8/JNK1 increases inflammasome activation by promoting deubiquitination by BRCC3 and NLRP3 homooligomerization. Phosphorylation at Ser-803 by CSNK1A1 prevents inflammasome activation by preventing NEK7 recruitment. Phosphorylation at Ser-3 in the pyrin domain inhibits homomultimerization of NLRP3 and activation of the NLRP3 inflammasome: dephosphorylation by protein phosphatase 2A (PP2A) promotes assembly of the NLRP3 inflammasome. Phosphorylation at Ser-291 by PKD/PRKD1 promotes NLRP3 inflammasome assembly. Phosphorylation by ERK1/MAPK3 promotes NLRP3 inflammasome assembly. Phosphorylation by BTK (at Tyr-132, Tyr-136, Tyr-145 and Tyr-164) in the region that mediates binding to phosphatidylinositol phosphate, promotes relocalization of NLRP3 and assembly of the NLRP3 inflammasome. Phosphorylation at Tyr-858 inhibits NLRP3 inflammasome assembly: dephosphorylation by PTPN22 promotes inflammasome activation Phosphorylated by LATS1 and LATS2 at Ser-261 following palmitoylation by ZDHHC1, promoting its relocalization to the microtubule organizing center (MTOC), where NLRP3 is activated by NEK7, leading to inflammasome assembly and activation. In terms of processing, ubiquitinated; undergoes both 'Lys-48'- and 'Lys-63'-linked polyubiquitination. Ubiquitination does not lead to degradation, but inhibits inflammasome activation. Deubiquitination is catalyzed by BRCC3 and associated with NLRP3 activation and inflammasome assembly. This process can be induced by the activation of Toll-like receptors (by LPS), through a non-transcriptional pathway dependent on the mitochondrial production of reactive oxygen species, and by ATP. Ubiquitinated by TRIM31 via 'Lys-48'-linked ubiquitination, leading to its degradation by the proteasome. Ubiquitinated at Lys-687 by the SCF(FBXL2) complex, leading to its degradation by the proteasome. Ubiquitinated by TRIM35 via 'lys-48' and 'Lys-63'-linked ubiquitination leading to inhibition of NLRP3 inflammasome activation. Undergoes 'Lys-27'-linked polyubiquitination by MARCHF5, leading to NLRP3-NEK7 complex formation and NLRP3 oligomerization. The disulfide bond in the pyrin domain might play a role in reactive oxygen species-mediated activation. Post-translationally, palmitoylation by ZDHHC12 promotes NLRP3 degradation by the chaperone-mediated autophagy pathway (CMA) and therefore limits NLRP3 inflammasome activation. Interaction with ZDHHC12, and hence NLRP3 palmitoylation, is enhanced by ABHD8. Following palmitoylation, HSPA8/HSC70 recognizes and binds the KFERQ-like motifs on NLRP3 and promotes NLRP3 recruitment to lysosomes, where it is degraded via the chaperone-mediated autophagy pathway in a LAMP2-dependent process. Palmitoylation at Cys-834 and Cys-835 by ZDHHC5 enhances its binding to NEK7 leading to inflammasome assembly and activation. Palmitoylation at Cys-126 and Cys-955 by ZDHHC1 facilitates phosphorylation at Ser-261 by LATS1 and LATS2, promoting its relocalization to the microtubule organizing center (MTOC), where NLRP3 is activated by NEK7, leading to inflammasome assembly and activation. Depalmitoylated by ABHD17A. In terms of processing, degraded via selective autophagy following interaction with Irgm1. Irgm1 promotes NLRP3 recruitment to autophagosome membranes, promoting its SQSTM1/p62-dependent autophagy-dependent degradation. In terms of tissue distribution, expressed with high levels in peripheral blood leukocytes, including Th2 lymphocytes and macrophages. Expressed at low levels in resting osteoblasts (at protein level).

Its subcellular location is the cytoplasm. The protein resides in the cytosol. It is found in the inflammasome. It localises to the cytoskeleton. The protein localises to the microtubule organizing center. Its subcellular location is the golgi apparatus membrane. The protein resides in the endoplasmic reticulum. It is found in the mitochondrion. It localises to the secreted. The protein localises to the nucleus. It carries out the reaction ATP + H2O = ADP + phosphate + H(+). With respect to regulation, under resting conditions, NLRP3 binds ADP and is autoinhibited. Inactive NLRP3 forms homodecameric double-ring cages that hide pyrin domains within NACHT-LRR rings to avoid premature activation. NLRP3 activation stimuli include extracellular ATP, nigericin, reactive oxygen species, crystals of monosodium urate or cholesterol, amyloid-beta fibers, environmental or industrial particles and nanoparticles, such as asbestos, silica, aluminum salts, cytosolic dsRNA, etc. Almost all stimuli trigger intracellular K(+) efflux. These stimuli lead to membrane perturbations that induce activation of NLRP3. Upon activation, NLRP3 is transported to microtubule organizing center (MTOC), where it is unlocked by NEK7, leading to its relocalization to dispersed trans-Golgi network (dTGN) vesicle membranes and recruitment of PYCARD/ASC for the formation of an active inflammasome complex. NEK7-activated NLRP3 forms a disk-shaped inflammasome. NLRP3 and PYCARD/ASC interact via their respective pyrin domains; interaction initiates speck formation (nucleation) which greatly enhances further addition of soluble PYCARD/ASC molecules to the speck in a prion-like polymerization process. Clustered PYCARD/ASC nucleates the formation of CASP1 filaments through the interaction of their respective CARD domains, acting as a platform for CASP1 polymerization and activation. Active CASP1 then processes IL1B and IL18 precursors, leading to the release of mature cytokines in the extracellular milieu and inflammatory response. NLRP3 inflammasome assembly is inhibited by IRGM, which impedes NLRP3 oligomerization. NLRP3 inflammasome is inhibited by cyclic AMP (cAMP), which directly binds NLRP3; inhibition is relieved by calcium-sensing receptor CASR, which inhibits production of cAMP. Specifically inhibited by sulfonylurea MCC950 (also named CP-456,773, CRID3), a potent and specific small-molecule inhibitor of the NLRP3 inflammasome that acts by preventing ATP hydrolysis. In terms of biological role, sensor component of the NLRP3 inflammasome, which mediates inflammasome activation in response to defects in membrane integrity, leading to secretion of inflammatory cytokines IL1B and IL18 and pyroptosis. In response to pathogens and other damage-associated signals that affect the integrity of membranes, initiates the formation of the inflammasome polymeric complex composed of NLRP3, CASP1 and PYCARD/ASC. Recruitment of pro-caspase-1 (proCASP1) to the NLRP3 inflammasome promotes caspase-1 (CASP1) activation, which subsequently cleaves and activates inflammatory cytokines IL1B and IL18 and gasdermin-D (GSDMD), promoting cytokine secretion and pyroptosis. Activation of NLRP3 inflammasome is also required for HMGB1 secretion; stimulating inflammatory responses. Under resting conditions, ADP-bound NLRP3 is autoinhibited. NLRP3 activation stimuli include extracellular ATP, nigericin, reactive oxygen species, crystals of monosodium urate or cholesterol, amyloid-beta fibers, environmental or industrial particles and nanoparticles, such as asbestos, silica, aluminum salts, cytosolic dsRNA, etc. Almost all stimuli trigger intracellular K(+) efflux. These stimuli lead to membrane perturbation and activation of NLRP3. Upon activation, NLRP3 is transported to microtubule organizing center (MTOC), where it is unlocked by NEK7, leading to its relocalization to dispersed trans-Golgi network (dTGN) vesicle membranes and formation of an active inflammasome complex. Associates with dTGN vesicle membranes by binding to phosphatidylinositol 4-phosphate (PtdIns4P). Shows ATPase activity. Its function is as follows. Independently of inflammasome activation, regulates the differentiation of T helper 2 (Th2) cells and has a role in Th2 cell-dependent asthma and tumor growth. During Th2 differentiation, required for optimal IRF4 binding to IL4 promoter and for IRF4-dependent IL4 transcription. Binds to the consensus DNA sequence 5'-GRRGGNRGAG-3'. May also participate in the transcription of IL5, IL13, GATA3, CCR3, CCR4 and MAF. This Mus musculus (Mouse) protein is NACHT, LRR and PYD domains-containing protein 3.